The following is a 68-amino-acid chain: DNA-directed RNA polymerase subunit omega (68 aa).

This sequence belongs to the RNA polymerase subunit omega family. The RNAP catalytic core consists of 2 alpha, 1 beta, 1 beta' and 1 omega subunit. When a sigma factor is associated with the core the holoenzyme is formed, which can initiate transcription.

The catalysed reaction is RNA(n) + a ribonucleoside 5'-triphosphate = RNA(n+1) + diphosphate. Promotes RNA polymerase assembly. Latches the N- and C-terminal regions of the beta' subunit thereby facilitating its interaction with the beta and alpha subunits. This is DNA-directed RNA polymerase subunit omega from Alkaliphilus metalliredigens (strain QYMF).